A 688-amino-acid polypeptide reads, in one-letter code: Complement C1s subcomponent (688 aa).

An N-terminal signal peptide occupies residues 1–15 (MWCFVFFSLLASFSA). One can recognise a CUB 1 domain in the interval 16–130 (EPTMYGEILS…TGFAAYYSAV (115 aa)). Positions 60, 68, 113, 131, 132, and 134 each coordinate Ca(2+). Residues cysteine 65 and cysteine 83 are joined by a disulfide bond. Residues 131–172 (DVNECTDFTDVPCSHFCNNFIGGYFCSCPPEYFLHDDMRTCG) enclose the EGF-like; calcium-binding domain. 3 cysteine pairs are disulfide-bonded: cysteine 135–cysteine 147, cysteine 143–cysteine 156, and cysteine 158–cysteine 171. Residues asparagine 149, phenylalanine 150, and glycine 153 each coordinate Ca(2+). Asparagine 149 is subject to (3R)-3-hydroxyasparagine. A glycan (N-linked (GlcNAc...) asparagine) is linked at asparagine 174. Cysteine 175 and cysteine 202 are joined by a disulfide. Positions 175–290 (CSGDVFTALI…KGWKLRYHGD (116 aa)) constitute a CUB 2 domain. Positions 226, 236, 275, 278, and 279 each coordinate Ca(2+). A disulfide bridge links cysteine 234 with cysteine 251. Sushi domains are found at residues 292–356 (IPCP…ECQP) and 357–423 (VDCG…KCIP). 7 disulfide bridges follow: cysteine 294-cysteine 341, cysteine 321-cysteine 354, cysteine 359-cysteine 403, cysteine 386-cysteine 421, cysteine 425-cysteine 549, cysteine 595-cysteine 618, and cysteine 627-cysteine 659. The N-linked (GlcNAc...) asparagine glycan is linked to asparagine 406. Residues 438 to 680 (IFGGYSTKIQ…YVDWILKTMQ (243 aa)) enclose the Peptidase S1 domain. Active-site charge relay system residues include histidine 475 and aspartate 529. The active-site Charge relay system is serine 631.

Belongs to the peptidase S1 family. Core component of the complement C1 complex, a calcium-dependent complex composed of 1 molecule of the C1Q subcomplex, 2 molecules of C1R and 2 molecules of C1S. The C1Q subcomplex is composed 18 subunits: 3 chains of C1QA, C1QB, and C1QC trimerize to form 6 collagen-like triple helices connected to six globular ligand-recognition modules. In terms of processing, cleaved and activated by C1R to generate Complement C1s subcomponent heavy and light chains. The iron and 2-oxoglutarate dependent 3-hydroxylation of aspartate and asparagine is (R) stereospecific within EGF domains.

The protein resides in the secreted. It is found in the cell surface. The enzyme catalyses Cleavage of Arg-|-Ala bond in complement component C4 to form C4a and C4b, and Lys(or Arg)-|-Lys bond in complement component C2 to form C2a and C2b: the 'classical' pathway C3 convertase.. With respect to regulation, cleaved and activated by C1R. Immunoglobulin-binding promotes autoactivation of C1R, which results in the cleavage of the Arg-Ile bond in the catalytic domain. Inhibited by C1 inhibitor (SERPING1). Its function is as follows. Component of the complement C1 complex, a multiprotein complex that initiates the classical pathway of the complement system, a cascade of proteins that leads to phagocytosis and breakdown of pathogens and signaling that strengthens the adaptive immune system. C1S is activated following association of the C1 complex with immunoglobulins (IgG or IgM) complexed with antigens to form antigen-antibody complexes on the surface of pathogens. C1S is cleaved and activated by C1R to generate C1s subcomponent heavy and light chains. C1s subcomponent light chain then cleaves and activates C2 and C4, the next components of the classical complement pathway. In terms of biological role, serine protease component of the complement C1 complex, which catalyzes cleavage and activation of C2 and C4, the next components of the classical complement pathway. Also cleaves IGFBP5 and thereby inhibits the trophic effects of IGF1. This is Complement C1s subcomponent from Rattus norvegicus (Rat).